Consider the following 586-residue polypeptide: Probable zinc metalloprotease EGY3, chloroplastic (586 aa).

Residues 1–54 (MSSSSLVTSLLFSSSSSSNTATSTSSRRSFSLFSKNQYCKPSPLRRSSSLLLVR) constitute a chloroplast transit peptide. Positions 62–73 (EEKAAPAAESHH) are enriched in basic and acidic residues. The segment at 62-118 (EEKAAPAAESHHAGGGQDDAATASHHAVEGENGVADADGGGVKKSKEELEEEEQQEV) is disordered. A coiled-coil region spans residues 103–195 (VKKSKEELEE…NTFKALDLNK (93 aa)). 7 helical membrane passes run 287-307 (LSAVALAVTTFGTIAIMSGFF), 318-338 (VSDVLPLFAGFLSILGVSEIA), 389-409 (ASAYLTSVALAVSAFVSDGSL), 427-447 (PLLSFVQAVIGPYADELGNVL), 454-474 (VGVPVDPLAFAGLLGIVVTSL), 506-526 (VALGAGAIIGGSVLCLAWGLF), and 550-570 (YAWGLVLAVVCLLTLFPNGGG).

The protein belongs to the peptidase M50B family.

It is found in the plastid. Its subcellular location is the chloroplast membrane. Its function is as follows. Probable membrane-associated metalloprotease that may be involved in chloroplast development. The protein is Probable zinc metalloprotease EGY3, chloroplastic (EGY3) of Oryza sativa subsp. indica (Rice).